Reading from the N-terminus, the 571-residue chain is Proline--tRNA ligase (571 aa).

The protein belongs to the class-II aminoacyl-tRNA synthetase family. ProS type 1 subfamily. As to quaternary structure, homodimer.

The protein localises to the cytoplasm. The catalysed reaction is tRNA(Pro) + L-proline + ATP = L-prolyl-tRNA(Pro) + AMP + diphosphate. Functionally, catalyzes the attachment of proline to tRNA(Pro) in a two-step reaction: proline is first activated by ATP to form Pro-AMP and then transferred to the acceptor end of tRNA(Pro). As ProRS can inadvertently accommodate and process non-cognate amino acids such as alanine and cysteine, to avoid such errors it has two additional distinct editing activities against alanine. One activity is designated as 'pretransfer' editing and involves the tRNA(Pro)-independent hydrolysis of activated Ala-AMP. The other activity is designated 'posttransfer' editing and involves deacylation of mischarged Ala-tRNA(Pro). The misacylated Cys-tRNA(Pro) is not edited by ProRS. In Pseudomonas entomophila (strain L48), this protein is Proline--tRNA ligase.